The following is a 467-amino-acid chain: Glutamate--tRNA ligase (467 aa).

Residues 9 to 19 (PSPTGFLHIGG) carry the 'HIGH' region motif. Residues 250–254 (KLSKR) carry the 'KMSKS' region motif. Lysine 253 contacts ATP.

It belongs to the class-I aminoacyl-tRNA synthetase family. Glutamate--tRNA ligase type 1 subfamily. As to quaternary structure, monomer.

The protein resides in the cytoplasm. It carries out the reaction tRNA(Glu) + L-glutamate + ATP = L-glutamyl-tRNA(Glu) + AMP + diphosphate. Catalyzes the attachment of glutamate to tRNA(Glu) in a two-step reaction: glutamate is first activated by ATP to form Glu-AMP and then transferred to the acceptor end of tRNA(Glu). This is Glutamate--tRNA ligase from Mesomycoplasma hyopneumoniae (strain J / ATCC 25934 / NCTC 10110) (Mycoplasma hyopneumoniae).